A 476-amino-acid chain; its full sequence is Bifunctional protein HldE (476 aa).

The segment at 1-319 is ribokinase; that stretch reads MKLTLPDYDQ…EAIYGSQDSG (319 aa). 195–198 contacts ATP; the sequence is NLSE. The active site involves Asp-264. A cytidylyltransferase region spans residues 344–476; it reads MTNGCFDILH…IIEAIRGGKG (133 aa).

The protein in the N-terminal section; belongs to the carbohydrate kinase PfkB family. It in the C-terminal section; belongs to the cytidylyltransferase family. In terms of assembly, homodimer.

The catalysed reaction is D-glycero-beta-D-manno-heptose 7-phosphate + ATP = D-glycero-beta-D-manno-heptose 1,7-bisphosphate + ADP + H(+). It catalyses the reaction D-glycero-beta-D-manno-heptose 1-phosphate + ATP + H(+) = ADP-D-glycero-beta-D-manno-heptose + diphosphate. Its pathway is nucleotide-sugar biosynthesis; ADP-L-glycero-beta-D-manno-heptose biosynthesis; ADP-L-glycero-beta-D-manno-heptose from D-glycero-beta-D-manno-heptose 7-phosphate: step 1/4. It participates in nucleotide-sugar biosynthesis; ADP-L-glycero-beta-D-manno-heptose biosynthesis; ADP-L-glycero-beta-D-manno-heptose from D-glycero-beta-D-manno-heptose 7-phosphate: step 3/4. Its function is as follows. Catalyzes the phosphorylation of D-glycero-D-manno-heptose 7-phosphate at the C-1 position to selectively form D-glycero-beta-D-manno-heptose-1,7-bisphosphate. Catalyzes the ADP transfer from ATP to D-glycero-beta-D-manno-heptose 1-phosphate, yielding ADP-D-glycero-beta-D-manno-heptose. In Photobacterium profundum (strain SS9), this protein is Bifunctional protein HldE.